A 272-amino-acid chain; its full sequence is MNSDSSSVSSRASSPDMDEMYLRDHHHRHHHHQESRLNSVSSTQGDMMQKMPGESLSRAGAKAAGESSKYKIKKQLSEQDLQQLRLKINGRERKRMHDLNLAMDGLREVMPYAHGPSVRKLSKIATLLLARNYILMLTSSLEEMKRLVGEIYGGHHSAFHCGTVGHSAGHPAHAANSVHPVHPILGGALSSGNASSPLSAASLPAIGTIRPPHSLLKAPSTPPALQLGSGFQHWAGLPCPCTICQMPPPPHLSALSTANMARLSAESKDLLK.

The span at 1–14 shows a compositional bias: low complexity; the sequence is MNSDSSSVSSRASS. The disordered stretch occupies residues 1–71; that stretch reads MNSDSSSVSS…KAAGESSKYK (71 aa). A compositionally biased stretch (basic residues) spans 24–33; the sequence is DHHHRHHHHQ. Positions 36-46 are enriched in polar residues; that stretch reads RLNSVSSTQGD. A coiled-coil region spans residues 68–89; the sequence is SKYKIKKQLSEQDLQQLRLKIN. The bHLH domain maps to 83 to 137; that stretch reads QLRLKINGRERKRMHDLNLAMDGLREVMPYAHGPSVRKLSKIATLLLARNYILML.

The protein localises to the nucleus. Functionally, may determine the distinct specification program of class A neurons in the dorsal part of the spinal cord and suppress specification of class B neurons. This is Oligodendrocyte transcription factor 3 (OLIG3) from Homo sapiens (Human).